The chain runs to 217 residues: THAP domain-containing protein 2 (217 aa).

Residues Met-1 to Phe-80 form a THAP-type zinc finger. Residues Glu-122 to Tyr-125 carry the HCFC1-binding motif (HBM) motif.

This is THAP domain-containing protein 2 (Thap2) from Mus musculus (Mouse).